A 107-amino-acid polypeptide reads, in one-letter code: Large ribosomal subunit protein bL21 (107 aa).

Belongs to the bacterial ribosomal protein bL21 family. As to quaternary structure, part of the 50S ribosomal subunit. Contacts protein L20.

This protein binds to 23S rRNA in the presence of protein L20. The polypeptide is Large ribosomal subunit protein bL21 (Pseudothermotoga lettingae (strain ATCC BAA-301 / DSM 14385 / NBRC 107922 / TMO) (Thermotoga lettingae)).